The sequence spans 250 residues: Ubiquinone biosynthesis O-methyltransferase (250 aa).

The S-adenosyl-L-methionine site is built by Arg-41, Gly-72, Asp-93, and Met-136.

Belongs to the methyltransferase superfamily. UbiG/COQ3 family.

The catalysed reaction is a 3-demethylubiquinol + S-adenosyl-L-methionine = a ubiquinol + S-adenosyl-L-homocysteine + H(+). It carries out the reaction a 3-(all-trans-polyprenyl)benzene-1,2-diol + S-adenosyl-L-methionine = a 2-methoxy-6-(all-trans-polyprenyl)phenol + S-adenosyl-L-homocysteine + H(+). The protein operates within cofactor biosynthesis; ubiquinone biosynthesis. Its function is as follows. O-methyltransferase that catalyzes the 2 O-methylation steps in the ubiquinone biosynthetic pathway. This chain is Ubiquinone biosynthesis O-methyltransferase, found in Agrobacterium fabrum (strain C58 / ATCC 33970) (Agrobacterium tumefaciens (strain C58)).